The following is a 246-amino-acid chain: Phosphatidylserine decarboxylase proenzyme (246 aa).

S204 functions as the Schiff-base intermediate with substrate; via pyruvic acid in the catalytic mechanism. S204 is subject to Pyruvic acid (Ser); by autocatalysis.

It belongs to the phosphatidylserine decarboxylase family. PSD-A subfamily. In terms of assembly, heterodimer of a large membrane-associated beta subunit and a small pyruvoyl-containing alpha subunit. The cofactor is pyruvate. Post-translationally, is synthesized initially as an inactive proenzyme. Formation of the active enzyme involves a self-maturation process in which the active site pyruvoyl group is generated from an internal serine residue via an autocatalytic post-translational modification. Two non-identical subunits are generated from the proenzyme in this reaction, and the pyruvate is formed at the N-terminus of the alpha chain, which is derived from the carboxyl end of the proenzyme. The post-translation cleavage follows an unusual pathway, termed non-hydrolytic serinolysis, in which the side chain hydroxyl group of the serine supplies its oxygen atom to form the C-terminus of the beta chain, while the remainder of the serine residue undergoes an oxidative deamination to produce ammonia and the pyruvoyl prosthetic group on the alpha chain.

Its subcellular location is the cell membrane. It catalyses the reaction a 1,2-diacyl-sn-glycero-3-phospho-L-serine + H(+) = a 1,2-diacyl-sn-glycero-3-phosphoethanolamine + CO2. Its pathway is phospholipid metabolism; phosphatidylethanolamine biosynthesis; phosphatidylethanolamine from CDP-diacylglycerol: step 2/2. Its function is as follows. Catalyzes the formation of phosphatidylethanolamine (PtdEtn) from phosphatidylserine (PtdSer). The chain is Phosphatidylserine decarboxylase proenzyme from Zymomonas mobilis subsp. mobilis (strain ATCC 31821 / ZM4 / CP4).